The primary structure comprises 575 residues: Potassium-transporting ATPase potassium-binding subunit (575 aa).

The next 12 membrane-spanning stretches (helical) occupy residues 4 to 24 (SAWG…WPVG), 61 to 81 (LRYA…VYAL), 133 to 153 (GLAV…FALI), 180 to 200 (LWVL…QGVI), 258 to 278 (LANL…CFAF), 289 to 309 (WAVL…VIPA), 344 to 364 (IDAS…AVIA), 372 to 392 (LGGM…GGVG), 394 to 414 (GLYG…LMIG), 431 to 451 (LISI…AVAV), 499 to 519 (LLGL…LAIA), and 545 to 565 (LLIG…LALG).

Belongs to the KdpA family. In terms of assembly, the system is composed of three essential subunits: KdpA, KdpB and KdpC.

It localises to the cell inner membrane. Functionally, part of the high-affinity ATP-driven potassium transport (or Kdp) system, which catalyzes the hydrolysis of ATP coupled with the electrogenic transport of potassium into the cytoplasm. This subunit binds the periplasmic potassium ions and delivers the ions to the membrane domain of KdpB through an intramembrane tunnel. The protein is Potassium-transporting ATPase potassium-binding subunit of Variovorax paradoxus (strain S110).